We begin with the raw amino-acid sequence, 86 residues long: Small ribosomal subunit protein bS16 (86 aa).

This sequence belongs to the bacterial ribosomal protein bS16 family.

The sequence is that of Small ribosomal subunit protein bS16 from Leptothrix cholodnii (strain ATCC 51168 / LMG 8142 / SP-6) (Leptothrix discophora (strain SP-6)).